The following is a 209-amino-acid chain: Ribosomal RNA large subunit methyltransferase E (209 aa).

Residues Gly-63, Trp-65, Asp-83, Asp-99, and Asp-124 each contribute to the S-adenosyl-L-methionine site. Lys-164 serves as the catalytic Proton acceptor.

Belongs to the class I-like SAM-binding methyltransferase superfamily. RNA methyltransferase RlmE family.

Its subcellular location is the cytoplasm. It carries out the reaction uridine(2552) in 23S rRNA + S-adenosyl-L-methionine = 2'-O-methyluridine(2552) in 23S rRNA + S-adenosyl-L-homocysteine + H(+). Specifically methylates the uridine in position 2552 of 23S rRNA at the 2'-O position of the ribose in the fully assembled 50S ribosomal subunit. This is Ribosomal RNA large subunit methyltransferase E from Vibrio cholerae serotype O1 (strain ATCC 39541 / Classical Ogawa 395 / O395).